A 540-amino-acid polypeptide reads, in one-letter code: CTP synthase (540 aa).

The interval 1 to 267 (MKIMKFIFIT…GKLVTKKLNL (267 aa)) is amidoligase domain. CTP is bound at residue Ser-15. Ser-15 contacts UTP. Position 16 to 21 (16 to 21 (SLGKGI)) interacts with ATP. Tyr-56 lines the L-glutamine pocket. Asp-73 is an ATP binding site. Asp-73 and Glu-141 together coordinate Mg(2+). CTP is bound by residues 148–150 (DIE), 188–193 (KTKPTQ), and Lys-224. UTP is bound by residues 188-193 (KTKPTQ) and Lys-224. 240–242 (RDA) is a binding site for ATP. The Glutamine amidotransferase type-1 domain maps to 292 to 540 (TIGIVGKYVE…VRASLGEKIK (249 aa)). Residue Gly-360 participates in L-glutamine binding. The Nucleophile; for glutamine hydrolysis role is filled by Cys-387. Residues 388–391 (MGMQ), Glu-411, and Arg-468 each bind L-glutamine. Residues His-513 and Glu-515 contribute to the active site.

This sequence belongs to the CTP synthase family. Homotetramer.

The catalysed reaction is UTP + L-glutamine + ATP + H2O = CTP + L-glutamate + ADP + phosphate + 2 H(+). The enzyme catalyses L-glutamine + H2O = L-glutamate + NH4(+). It carries out the reaction UTP + NH4(+) + ATP = CTP + ADP + phosphate + 2 H(+). It functions in the pathway pyrimidine metabolism; CTP biosynthesis via de novo pathway; CTP from UDP: step 2/2. Allosterically activated by GTP, when glutamine is the substrate; GTP has no effect on the reaction when ammonia is the substrate. The allosteric effector GTP functions by stabilizing the protein conformation that binds the tetrahedral intermediate(s) formed during glutamine hydrolysis. Inhibited by the product CTP, via allosteric rather than competitive inhibition. Its function is as follows. Catalyzes the ATP-dependent amination of UTP to CTP with either L-glutamine or ammonia as the source of nitrogen. Regulates intracellular CTP levels through interactions with the four ribonucleotide triphosphates. The chain is CTP synthase from Methanocaldococcus jannaschii (strain ATCC 43067 / DSM 2661 / JAL-1 / JCM 10045 / NBRC 100440) (Methanococcus jannaschii).